The chain runs to 354 residues: MAELKNDRYLRALLKQPVDRTPVWMMRQAGRYLPEYKATRAEAGDFMSLCKNQDLACEVTLQPLRRYDLDAAILFSDILTVPDAMGLGLYFETGEGPRFERPTDTIDSIKKLCIPDPEDELGYVMRAVSTIRRELKGEVPLIGFSGSPWTLATYMVEGGSSKTFEKIKKMAYEEPATLHMLLDKLADSVILYLNAQVANGAQSLMIFDSWGGALSHHAYREFSLRYMQKIVDGLTRHADGRQVPVTLFTKGGGLWLESMAETGCDALGLDWTVDIGDARRRVGNKVALQGNMDPSVLYASPERIHQEVEQILSSYGEGTGHVFNLGHGIHQHVNPEHAGSFINSVHELSGKYHK.

Residues 27-31 (RQAGR), Asp-77, Tyr-154, Ser-209, and His-327 contribute to the substrate site.

It belongs to the uroporphyrinogen decarboxylase family. Homodimer.

The protein localises to the cytoplasm. It carries out the reaction uroporphyrinogen III + 4 H(+) = coproporphyrinogen III + 4 CO2. Its pathway is porphyrin-containing compound metabolism; protoporphyrin-IX biosynthesis; coproporphyrinogen-III from 5-aminolevulinate: step 4/4. Functionally, catalyzes the decarboxylation of four acetate groups of uroporphyrinogen-III to yield coproporphyrinogen-III. This is Uroporphyrinogen decarboxylase from Shewanella piezotolerans (strain WP3 / JCM 13877).